We begin with the raw amino-acid sequence, 131 residues long: Small ribosomal subunit protein uS8 (131 aa).

This sequence belongs to the universal ribosomal protein uS8 family. Part of the 30S ribosomal subunit. Contacts proteins S5 and S12.

In terms of biological role, one of the primary rRNA binding proteins, it binds directly to 16S rRNA central domain where it helps coordinate assembly of the platform of the 30S subunit. The chain is Small ribosomal subunit protein uS8 from Hyphomonas neptunium (strain ATCC 15444).